Consider the following 71-residue polypeptide: Beta-defensin 25 (71 aa).

A signal peptide spans 1-22; sequence MAKWILLIVALLVLGHVPSGST. Cystine bridges form between Cys-27/Cys-54, Cys-34/Cys-48, and Cys-38/Cys-55.

It belongs to the beta-defensin family.

Its subcellular location is the secreted. Its function is as follows. Has antibacterial activity. The sequence is that of Beta-defensin 25 (Defb25) from Rattus norvegicus (Rat).